Here is an 89-residue protein sequence, read N- to C-terminus: Small ribosomal subunit protein uS15 (89 aa).

This sequence belongs to the universal ribosomal protein uS15 family. In terms of assembly, part of the 30S ribosomal subunit. Forms a bridge to the 50S subunit in the 70S ribosome, contacting the 23S rRNA.

In terms of biological role, one of the primary rRNA binding proteins, it binds directly to 16S rRNA where it helps nucleate assembly of the platform of the 30S subunit by binding and bridging several RNA helices of the 16S rRNA. Functionally, forms an intersubunit bridge (bridge B4) with the 23S rRNA of the 50S subunit in the ribosome. This is Small ribosomal subunit protein uS15 from Rippkaea orientalis (strain PCC 8801 / RF-1) (Cyanothece sp. (strain PCC 8801)).